Consider the following 215-residue polypeptide: Pyrrolidone-carboxylate peptidase (215 aa).

Active-site residues include Glu-80, Cys-143, and His-167.

The protein belongs to the peptidase C15 family. As to quaternary structure, homotetramer.

The protein resides in the cytoplasm. It catalyses the reaction Release of an N-terminal pyroglutamyl group from a polypeptide, the second amino acid generally not being Pro.. Its function is as follows. Removes 5-oxoproline from various penultimate amino acid residues except L-proline. In Bacillus thuringiensis subsp. konkukian (strain 97-27), this protein is Pyrrolidone-carboxylate peptidase.